The following is a 204-amino-acid chain: UPF0637 protein lmo1065 (204 aa).

Belongs to the UPF0637 family.

In Listeria monocytogenes serovar 1/2a (strain ATCC BAA-679 / EGD-e), this protein is UPF0637 protein lmo1065.